We begin with the raw amino-acid sequence, 323 residues long: Aquaporin-4 (323 aa).

Residues 1–36 (MSDRPTARRWGKCGPLCTRENIMVAFKGVWTQAFWK) lie on the Cytoplasmic side of the membrane. S-palmitoyl cysteine attachment occurs at residues cysteine 13 and cysteine 17. The chain crosses the membrane as a helical span at residues 37 to 57 (AVTAEFLAMLIFVLLSLGSTI). The Extracellular segment spans residues 58–69 (NWGGTEKPLPVD). The chain crosses the membrane as a helical span at residues 70–89 (MVLISLCFGLSIATMVQCFG). Residues 90–93 (HISG) are Cytoplasmic-facing. Residues 94-101 (GHINPAVT) constitute an intramembrane region (discontinuously helical). An NPA 1 motif is present at residues 97-99 (NPA). Over 102–115 (VAMVCTRKISIAKS) the chain is Cytoplasmic. A Phosphoserine; by PKG modification is found at serine 111. The helical transmembrane segment at 116 to 136 (VFYIAAQCLGAIIGAGILYLV) threads the bilayer. At 137 to 155 (TPPSVVGGLGVTMVHGNLT) the chain is on the extracellular side. N-linked (GlcNAc...) asparagine glycosylation occurs at asparagine 153. Residues 156-176 (AGHGLLVELIITFQLVFTIFA) traverse the membrane as a helical segment. The Cytoplasmic segment spans residues 177-184 (SCDSKRTD). Serine 180 carries the phosphoserine; by PKC modification. Residues 185–205 (VTGSIALAIGFSVAIGHLFAI) form a helical membrane-spanning segment. Asparagine 206 is a glycosylation site (N-linked (GlcNAc...) asparagine). The Extracellular segment spans residues 206 to 208 (NYT). Residues 209-222 (GASMNPARSFGPAV) constitute an intramembrane region (discontinuously helical). The short motif at 213–215 (NPA) is the NPA 2 element. Topologically, residues 223–231 (IMGNWENHW) are extracellular. Residues 232–252 (IYWVGPIIGAVLAGGLYEYVF) form a helical membrane-spanning segment. The Cytoplasmic segment spans residues 253-323 (CPDVEFKRRF…DQSGEVLSSV (71 aa)). 2 positions are modified to phosphoserine: serine 276 and serine 285. Threonine 289 bears the Phosphothreonine mark. A Phosphoserine modification is found at serine 321.

This sequence belongs to the MIP/aquaporin (TC 1.A.8) family. In terms of assembly, homotetramer. The tetramers can form oligomeric arrays in membranes. The size of the oligomers differs between tissues and is smaller in skeletal muscle than in brain. Interaction between AQP4 oligomeric arrays in close-by cells can contribute to cell-cell adhesion. Part of a complex containing MLC1, TRPV4, HEPACAM and ATP1B1. Phosphorylation by PKC at Ser-180 reduces conductance by 50%. Phosphorylation by PKG at Ser-111 in response to glutamate increases conductance by 40%. In terms of processing, isoform 2: Palmitoylated on its N-terminal region. Isoform 1: Not palmitoylated. Detected in skeletal muscle. Detected in stomach, along the glandular base region of the fundic gland (at protein level). Detected in brain, lung and skeletal muscle, and at much lower levels in heart and ovary.

It localises to the cell membrane. Its subcellular location is the basolateral cell membrane. It is found in the endosome membrane. The protein localises to the sarcolemma. The protein resides in the cell projection. It catalyses the reaction H2O(in) = H2O(out). Forms a water-specific channel. Plays an important role in brain water homeostasis. It is involved in glymphatic solute transport and is required for a normal rate of water exchange across the blood brain interface. Required for normal levels of cerebrospinal fluid influx into the brain cortex and parenchyma along paravascular spaces that surround penetrating arteries, and for normal drainage of interstitial fluid along paravenous drainage pathways. Thereby, it is required for normal clearance of solutes from the brain interstitial fluid, including soluble beta-amyloid peptides derived from APP. Plays a redundant role in urinary water homeostasis and urinary concentrating ability. The protein is Aquaporin-4 (AQP4) of Homo sapiens (Human).